Here is a 343-residue protein sequence, read N- to C-terminus: Biotin synthase (343 aa).

In terms of domain architecture, Radical SAM core spans 36 to 254 (NTIQISTLLS…IAVARIMMPK (219 aa)). [4Fe-4S] cluster is bound by residues C51, C55, and C58. Residues C95, C126, C186, and R258 each coordinate [2Fe-2S] cluster.

Belongs to the radical SAM superfamily. Biotin synthase family. Homodimer. Requires [4Fe-4S] cluster as cofactor. It depends on [2Fe-2S] cluster as a cofactor.

It catalyses the reaction (4R,5S)-dethiobiotin + (sulfur carrier)-SH + 2 reduced [2Fe-2S]-[ferredoxin] + 2 S-adenosyl-L-methionine = (sulfur carrier)-H + biotin + 2 5'-deoxyadenosine + 2 L-methionine + 2 oxidized [2Fe-2S]-[ferredoxin]. Its pathway is cofactor biosynthesis; biotin biosynthesis; biotin from 7,8-diaminononanoate: step 2/2. Its function is as follows. Catalyzes the conversion of dethiobiotin (DTB) to biotin by the insertion of a sulfur atom into dethiobiotin via a radical-based mechanism. The protein is Biotin synthase of Buchnera aphidicola subsp. Acyrthosiphon pisum (strain APS) (Acyrthosiphon pisum symbiotic bacterium).